Reading from the N-terminus, the 1217-residue chain is Endonuclease YhcR (1217 aa).

A signal peptide spans 1 to 46 (MLSVEMISRQNRCHYVYKGGNMMRRILHIVLITALMFLNVMYTFEA). The TNase-like domain maps to 376 to 517 (GEYEGIVDRV…KKDQKGIWNE (142 aa)). Catalysis depends on residues arginine 404, glutamate 412, and arginine 460. Residues 590 to 828 (LRILSMNDLH…VIFAAHNHQV (239 aa)) are phosphoesterase. Positions 597, 599, 647, 680, 792, and 824 each coordinate a divalent metal cation. Residues 829–1085 (VNGEVNGKLI…AYTKEGRIKL (257 aa)) are 5'-nucleotidase. Residues phenylalanine 965 and 1035–1042 (FMATATGA) contribute to the substrate site. The interval 1087–1142 (EASDIEDPVTEDPITEEPGDDPGTEDPIKEDPRPGEDLPDIKETPGTAPVHQLPPS) is disordered. The segment covering 1089–1110 (SDIEDPVTEDPITEEPGDDPGT) has biased composition (acidic residues). The segment covering 1112–1129 (DPIKEDPRPGEDLPDIKE) has biased composition (basic and acidic residues). Positions 1182 to 1186 (LPDTS) match the LPXTG sorting signal motif. Threonine 1185 bears the Pentaglycyl murein peptidoglycan amidated threonine mark. Residues 1186–1217 (SAGYYNFMVIGAAVTLSGTYLYVRRKRSASRT) constitute a propeptide, removed by sortase.

It in the C-terminal section; belongs to the 5'-nucleotidase family. Ca(2+) serves as cofactor. Mn(2+) is required as a cofactor.

Its subcellular location is the secreted. It localises to the cell wall. Its activity is regulated as follows. Requires a minimum of 0.1 mM of calcium for a significant activity. Maximal activity was observed with concentrations of calcium between 1 to 5 mM. Is 10-fold less active with the corresponding concentrations of manganese. Inhibited by NaCl at concentrations of 100 mM and higher. In terms of biological role, sugar-nonspecific endonuclease that yields nucleotide 3'-monophosphate products. No 5'-nucleotidase activity was detected, using 5'-AMP as the substrate, in the presence of diverse divalent metals and with various pH values. In Bacillus subtilis (strain 168), this protein is Endonuclease YhcR (yhcR).